The chain runs to 310 residues: HPr kinase/phosphorylase (310 aa).

Active-site residues include His138 and Lys159. Residue 153 to 160 (GGSGVGKS) participates in ATP binding. Ser160 lines the Mg(2+) pocket. The Proton acceptor; for phosphorylation activity. Proton donor; for dephosphorylation activity role is filled by Asp177. Positions 201–210 (LEIRGLGIIN) are important for the catalytic mechanism of both phosphorylation and dephosphorylation. Glu202 is a Mg(2+) binding site. Arg243 is a catalytic residue. An important for the catalytic mechanism of dephosphorylation region spans residues 264-269 (PVRPGR).

Belongs to the HPrK/P family. In terms of assembly, homohexamer. Mg(2+) serves as cofactor.

It catalyses the reaction [HPr protein]-L-serine + ATP = [HPr protein]-O-phospho-L-serine + ADP + H(+). It carries out the reaction [HPr protein]-O-phospho-L-serine + phosphate + H(+) = [HPr protein]-L-serine + diphosphate. Catalyzes the ATP- as well as the pyrophosphate-dependent phosphorylation of a specific serine residue in HPr, a phosphocarrier protein of the phosphoenolpyruvate-dependent sugar phosphotransferase system (PTS). HprK/P also catalyzes the pyrophosphate-producing, inorganic phosphate-dependent dephosphorylation (phosphorolysis) of seryl-phosphorylated HPr (P-Ser-HPr). The two antagonistic activities of HprK/P are regulated by several intracellular metabolites, which change their concentration in response to the absence or presence of rapidly metabolisable carbon sources (glucose, fructose, etc.) in the growth medium. Also phosphorylates/dephosphorylates the HPr-like catabolite repression protein crh on a specific serine residue. Therefore, by controlling the phosphorylation state of HPr and crh, HPrK/P is a sensor enzyme that plays a major role in the regulation of carbon metabolism and sugar transport: it mediates carbon catabolite repression (CCR), and regulates PTS-catalyzed carbohydrate uptake and inducer exclusion. The polypeptide is HPr kinase/phosphorylase (Shouchella clausii (strain KSM-K16) (Alkalihalobacillus clausii)).